The following is a 483-amino-acid chain: 6-phosphogluconate dehydrogenase, decarboxylating (483 aa).

NADP(+) is bound by residues 10 to 15 (GLAVMG) and 33 to 35 (NRT). N6-acetyllysine is present on lysine 38. The residue at position 57 (serine 57) is a Phosphoserine. Residues 75-77 (VKA) and asparagine 103 each bind NADP(+). Residues asparagine 103, serine 129, and glycine 131 each contribute to the substrate site. Residue serine 129 is modified to Phosphoserine. Residue lysine 184 is the Proton acceptor of the active site. Substrate is bound at residue 187-188 (HN). The active-site Proton donor is glutamate 191. Residues tyrosine 192, lysine 261, arginine 288, arginine 447, and histidine 453 each coordinate substrate. 478–481 (SSSY) serves as a coordination point for NADP(+).

Belongs to the 6-phosphogluconate dehydrogenase family. In terms of assembly, homodimer.

The protein localises to the cytoplasm. It carries out the reaction 6-phospho-D-gluconate + NADP(+) = D-ribulose 5-phosphate + CO2 + NADPH. It functions in the pathway carbohydrate degradation; pentose phosphate pathway; D-ribulose 5-phosphate from D-glucose 6-phosphate (oxidative stage): step 3/3. In terms of biological role, catalyzes the oxidative decarboxylation of 6-phosphogluconate to ribulose 5-phosphate and CO(2), with concomitant reduction of NADP to NADPH. The sequence is that of 6-phosphogluconate dehydrogenase, decarboxylating (PGD) from Ovis aries (Sheep).